Consider the following 468-residue polypeptide: ERO1-like protein alpha (468 aa).

The N-terminal stretch at 1–23 (MGRRWGFLIGFLVAVGLLGLGHG) is a signal peptide. 8 cysteine pairs are disulfide-bonded: C35–C48, C37–C46, C85–C391, C94–C99, C94–C131, C99–C104, C208–C241, and C394–C397. S106, S143, and S145 each carry phosphoserine. FAD contacts are provided by R187, T189, and W200. FAD is bound by residues S252 and H255. N280 carries N-linked (GlcNAc...) asparagine glycosylation. FAD-binding residues include R287 and R300. A glycan (N-linked (GlcNAc...) asparagine) is linked at N384.

The protein belongs to the EROs family. As to quaternary structure, predominantly monomer. May function both as a monomer and a homodimer. Interacts with PDILT. Interacts with ERP44; the interaction results in retention of ERO1A in the endoplasmic reticulum. Requires FAD as cofactor. In terms of processing, the Cys-94/Cys-99 and Cys-394/Cys-397 disulfide bonds constitute the redox-active center. The Cys-94/Cys-99 disulfide bond may accept electron from P4HB and funnel them to the active site disulfide Cys-394/Cys-397. The regulatory Cys-99/Cys-104 disulfide bond stabilizes the other regulatory bond Cys-94/Cys-131. Phosphorylated on Ser-145 by FAM20C in the Golgi which increases its enzymatic activity. Phosphorylation is induced by lactation. It is also induced by hypoxia and reductive stress.

The protein localises to the endoplasmic reticulum membrane. Its subcellular location is the golgi apparatus lumen. It is found in the secreted. The protein resides in the cell projection. It localises to the dendrite. Enzyme activity is tightly regulated to prevent the accumulation of reactive oxygen species in the endoplasmic reticulum. Reversibly down-regulated by the formation of disulfide bonds between the active site Cys-94 and Cys-131, and between Cys-99 and Cys-104. Glutathione may be required to regulate its activity in the endoplasmic reticulum. Oxidoreductase involved in disulfide bond formation in the endoplasmic reticulum. Efficiently reoxidizes P4HB/PDI, the enzyme catalyzing protein disulfide formation, in order to allow P4HB to sustain additional rounds of disulfide formation. Following P4HB reoxidation, passes its electrons to molecular oxygen via FAD, leading to the production of reactive oxygen species (ROS) in the cell. Required for the proper folding of immunoglobulins. Plays an important role in ER stress-induced, CHOP-dependent apoptosis by activating the inositol 1,4,5-trisphosphate receptor IP3R1. The chain is ERO1-like protein alpha from Bos taurus (Bovine).